The primary structure comprises 225 residues: MNATTAPLPYSAARLHELAHVLIANIRELAHAGWTPATSSNFSHRLDEQHAAITVSGRDKGRLVEEDIMVVDFDGLAVGRPLRPSAETLLHTQLYRRFPEICCVLHTHSPVQTIASRLYAGSDVIRLEGYELLKAFEGNTTHETAVEVPVFANTQDMQVLAAQVDALLDKQSMWGYLIEGHGLYAWGRNMAEARRHLEAFEFLLQCELELLKLRGTRQVVPVPHS.

2 residues coordinate Zn(2+): His106 and His108.

This sequence belongs to the aldolase class II family. MtnB subfamily. The cofactor is Zn(2+).

It carries out the reaction 5-(methylsulfanyl)-D-ribulose 1-phosphate = 5-methylsulfanyl-2,3-dioxopentyl phosphate + H2O. It functions in the pathway amino-acid biosynthesis; L-methionine biosynthesis via salvage pathway; L-methionine from S-methyl-5-thio-alpha-D-ribose 1-phosphate: step 2/6. In terms of biological role, catalyzes the dehydration of methylthioribulose-1-phosphate (MTRu-1-P) into 2,3-diketo-5-methylthiopentyl-1-phosphate (DK-MTP-1-P). This chain is Methylthioribulose-1-phosphate dehydratase, found in Xanthomonas oryzae pv. oryzae (strain PXO99A).